Consider the following 294-residue polypeptide: Flavin-dependent thymidylate synthase (294 aa).

The ThyX domain maps to 27–250 (GFIRVIDYMG…PFVYEAFEEY (224 aa)). Residues T73, 96–98 (RHR), and E104 contribute to the FAD site. DUMP-binding positions include 93 to 96 (QWIR), 104 to 108 (EYSAR), and R189. The short motif at 96–106 (RHRTASVNEYS) is the ThyX motif element. Residues 205–207 (NLH) and H211 each bind FAD. R216 contributes to the dUMP binding site. R216 serves as the catalytic Involved in ionization of N3 of dUMP, leading to its activation.

This sequence belongs to the thymidylate synthase ThyX family. Homotetramer. FAD is required as a cofactor.

It catalyses the reaction dUMP + (6R)-5,10-methylene-5,6,7,8-tetrahydrofolate + NADPH + H(+) = dTMP + (6S)-5,6,7,8-tetrahydrofolate + NADP(+). It participates in pyrimidine metabolism; dTTP biosynthesis. Catalyzes the reductive methylation of 2'-deoxyuridine-5'-monophosphate (dUMP) to 2'-deoxythymidine-5'-monophosphate (dTMP) while utilizing 5,10-methylenetetrahydrofolate (mTHF) as the methyl donor, and NADPH and FADH(2) as the reductant. The polypeptide is Flavin-dependent thymidylate synthase (Rickettsia conorii (strain ATCC VR-613 / Malish 7)).